The chain runs to 499 residues: MIVEMTGIHKSFSGNPVLKDVSFTLEKGEIHALMGENGAGKSTLMKILTGIYERDSGTVKIKGREVHYKHPKEAEADGLAVIHQELNILPELTVAENLFVGKERTYGKTGWIKSKEMNRLAEEKLAELGLKVKGTERAGNLSVGKQQLIEIAKALMTNADIIIMDEPTAALTDREIDTLFATVRELQKKGVTFVYISHRMEEIFSLCQRITVLRDGEYVGTKVIAETSFDEIVKMMVGRALGNRFPEHTLTPGDVKLEIKHLTRAGEFENVSLSVRAGEILGISGLMGAGRSELVETIFGYRKADSGEVWIDGKQAAIKGPDQAIAQGIGFVSEDRKSKGLIVDFSIRDNISLTNLSRISTSSWISSEKERSLYEELAKKLHVKASGPSQQAKSLSGGNQQKIVIAKWLGIEPKILILDEPTRGVDVGAKKEIYTIMNELAKQGVAIIMVSSELPEVIGLSTRVAVMFEGKLMHILERDELSEETIMHYATGGDKHVRQ.

ABC transporter domains lie at 3 to 240 (VEMT…VGRA) and 250 to 494 (LTPG…TGGD). ATP is bound at residue 35-42 (GENGAGKS).

This sequence belongs to the ABC transporter superfamily. Ribose importer (TC 3.A.1.2.1) family. In terms of assembly, the complex is composed of an ATP-binding protein (RbsA), two transmembrane proteins (RbsC) and a solute-binding protein (RbsB).

It is found in the cell membrane. It carries out the reaction D-ribose(out) + ATP + H2O = D-ribose(in) + ADP + phosphate + H(+). In terms of biological role, part of the ABC transporter complex RbsABC involved in ribose import. Responsible for energy coupling to the transport system. The sequence is that of Ribose import ATP-binding protein RbsA from Halalkalibacterium halodurans (strain ATCC BAA-125 / DSM 18197 / FERM 7344 / JCM 9153 / C-125) (Bacillus halodurans).